The primary structure comprises 285 residues: Nucleotide-binding protein Pnap_0906 (285 aa).

8–15 (GMSGSGKS) contacts ATP. 57 to 60 (DVRS) is a GTP binding site.

Belongs to the RapZ-like family.

Displays ATPase and GTPase activities. This Polaromonas naphthalenivorans (strain CJ2) protein is Nucleotide-binding protein Pnap_0906.